The sequence spans 34 residues: Phalloidin proprotein (34 aa).

A propeptide spanning residues 1 to 10 (MSDINASRLP) is cleaved from the precursor. The cyclopeptide (Ala-Pro) cross-link spans 11–17 (AWLATCP). The 2'-cysteinyl-6'-hydroxytryptophan sulfoxide (Trp-Cys) cross-link spans 12–16 (WLATC). The propeptide occupies 18-34 (CVGDDVNPTLSRGESLC).

It belongs to the MSDIN fungal toxin family. Post-translationally, processed by the macrocyclase-peptidase enzyme POPB to yield a toxic cyclic heptapeptide. POPB first removes 10 residues from the N-terminus. Conformational trapping of the remaining peptide forces the enzyme to release this intermediate rather than proceed to macrocyclization. The enzyme rebinds the remaining peptide in a different conformation and catalyzes macrocyclization of the N-terminal 7 residues.

In terms of biological role, toxin that belongs to the bicyclic heptapeptides called phallotoxins. Although structurally related to amatoxins, phallotoxins have a different mode of action, which is the stabilization of F-actin. Phallotoxins are poisonous when administered parenterally, but not orally because of poor absorption. The chain is Phalloidin proprotein from Amanita phalloides (Death cap).